The primary structure comprises 657 residues: UvrABC system protein B (657 aa).

The Helicase ATP-binding domain occupies 29-416 (KLAEFQTNEQ…LSHNNVVEQL (388 aa)). 42 to 49 (GATGTGKT) provides a ligand contact to ATP. The short motif at 95-118 (YFDFYQPEAYLPAKGVYIEKSATV) is the Beta-hairpin element. The Helicase C-terminal domain maps to 435–597 (QVEDLVSEII…KTPMTVQKPI (163 aa)). The UVR domain occupies 615 to 650 (AALIKQLTKEMKQAAANQNYELAIEIRDSIFELEKQ).

It belongs to the UvrB family. As to quaternary structure, forms a heterotetramer with UvrA during the search for lesions. Interacts with UvrC in an incision complex.

Its subcellular location is the cytoplasm. Functionally, the UvrABC repair system catalyzes the recognition and processing of DNA lesions. A damage recognition complex composed of 2 UvrA and 2 UvrB subunits scans DNA for abnormalities. Upon binding of the UvrA(2)B(2) complex to a putative damaged site, the DNA wraps around one UvrB monomer. DNA wrap is dependent on ATP binding by UvrB and probably causes local melting of the DNA helix, facilitating insertion of UvrB beta-hairpin between the DNA strands. Then UvrB probes one DNA strand for the presence of a lesion. If a lesion is found the UvrA subunits dissociate and the UvrB-DNA preincision complex is formed. This complex is subsequently bound by UvrC and the second UvrB is released. If no lesion is found, the DNA wraps around the other UvrB subunit that will check the other stand for damage. The protein is UvrABC system protein B of Mycoplasma pneumoniae (strain ATCC 29342 / M129 / Subtype 1) (Mycoplasmoides pneumoniae).